The following is a 94-amino-acid chain: Large ribosomal subunit protein uL23 (94 aa).

This sequence belongs to the universal ribosomal protein uL23 family. Part of the 50S ribosomal subunit. Contacts protein L29, and trigger factor when it is bound to the ribosome.

In terms of biological role, one of the early assembly proteins it binds 23S rRNA. One of the proteins that surrounds the polypeptide exit tunnel on the outside of the ribosome. Forms the main docking site for trigger factor binding to the ribosome. This chain is Large ribosomal subunit protein uL23, found in Geobacter sp. (strain M21).